We begin with the raw amino-acid sequence, 341 residues long: Heat-inducible transcription repressor HrcA (341 aa).

Belongs to the HrcA family.

Its function is as follows. Negative regulator of class I heat shock genes (grpE-dnaK-dnaJ and groELS operons). Prevents heat-shock induction of these operons. The chain is Heat-inducible transcription repressor HrcA from Carboxydothermus hydrogenoformans (strain ATCC BAA-161 / DSM 6008 / Z-2901).